A 242-amino-acid chain; its full sequence is Large ribosomal subunit protein uL1 (242 aa).

The protein belongs to the universal ribosomal protein uL1 family. Part of the 50S ribosomal subunit.

Its function is as follows. Binds directly to 23S rRNA. The L1 stalk is quite mobile in the ribosome, and is involved in E site tRNA release. Protein L1 is also a translational repressor protein, it controls the translation of the L11 operon by binding to its mRNA. This Streptomyces sp. (strain FRI-5) protein is Large ribosomal subunit protein uL1.